The following is a 266-amino-acid chain: DNA-directed RNA polymerase subunit Rpo3 (266 aa).

[3Fe-4S] cluster is bound by residues C205, C208, and C211.

Belongs to the archaeal Rpo3/eukaryotic RPB3 RNA polymerase subunit family. As to quaternary structure, part of the RNA polymerase complex. [3Fe-4S] cluster serves as cofactor.

The protein localises to the cytoplasm. It carries out the reaction RNA(n) + a ribonucleoside 5'-triphosphate = RNA(n+1) + diphosphate. DNA-dependent RNA polymerase (RNAP) catalyzes the transcription of DNA into RNA using the four ribonucleoside triphosphates as substrates. The sequence is that of DNA-directed RNA polymerase subunit Rpo3 from Methanosarcina acetivorans (strain ATCC 35395 / DSM 2834 / JCM 12185 / C2A).